The sequence spans 348 residues: Erythronate-4-phosphate dehydrogenase (348 aa).

The substrate site is built by Thr-46 and Thr-67. Asp-147 contributes to the NAD(+) binding site. Arg-209 is an active-site residue. An NAD(+)-binding site is contributed by Asp-233. Residue Glu-238 is part of the active site. The active-site Proton donor is His-255. Residue Gly-258 participates in NAD(+) binding. Tyr-259 serves as a coordination point for substrate.

This sequence belongs to the D-isomer specific 2-hydroxyacid dehydrogenase family. PdxB subfamily. In terms of assembly, homodimer.

Its subcellular location is the cytoplasm. It catalyses the reaction 4-phospho-D-erythronate + NAD(+) = (R)-3-hydroxy-2-oxo-4-phosphooxybutanoate + NADH + H(+). It functions in the pathway cofactor biosynthesis; pyridoxine 5'-phosphate biosynthesis; pyridoxine 5'-phosphate from D-erythrose 4-phosphate: step 2/5. Its function is as follows. Catalyzes the oxidation of erythronate-4-phosphate to 3-hydroxy-2-oxo-4-phosphonooxybutanoate. The sequence is that of Erythronate-4-phosphate dehydrogenase from Bacteroides fragilis (strain YCH46).